We begin with the raw amino-acid sequence, 322 residues long: Pyridoxal kinase (322 aa).

The residue at position 1 (Met1) is an N-acetylmethionine. Positions 22 and 57 each coordinate pyridoxal. Position 57 (Thr57) interacts with pyridoxal 5'-phosphate. Residue Ser69 is modified to Phosphoserine. An ATP-binding site is contributed by Asp123. A Na(+)-binding site is contributed by Asp123. Residue Asp128 coordinates Mg(2+). Thr158 provides a ligand contact to Na(+). An ATP-binding site is contributed by 160–163 (NQFE). Ser174 is subject to Phosphoserine. Thr196 lines the Na(+) pocket. 196-197 (TS) contacts ATP. Ser223 carries the phosphoserine modification. Residues 236–238 (VDA) and Thr243 contribute to the ATP site. Residue 244 to 245 (GD) participates in pyridoxal 5'-phosphate binding. Asp245 serves as the catalytic Proton acceptor. Ser295 carries the phosphoserine modification.

The protein belongs to the pyridoxine kinase family. In terms of assembly, homodimer. The cofactor is Zn(2+). Requires Mg(2+) as cofactor. Post-translationally, the N-terminus is blocked.

The protein resides in the cytoplasm. It is found in the cytosol. The catalysed reaction is pyridoxal + ATP = pyridoxal 5'-phosphate + ADP + H(+). It catalyses the reaction pyridoxamine + ATP = pyridoxamine 5'-phosphate + ADP + H(+). It carries out the reaction pyridoxine + ATP = pyridoxine 5'-phosphate + ADP + H(+). Its pathway is cofactor metabolism; pyridoxal 5'-phosphate salvage; pyridoxal 5'-phosphate from pyridoxal: step 1/1. It participates in cofactor metabolism; pyridoxal 5'-phosphate salvage; pyridoxine 5'-phosphate from pyridoxine: step 1/1. It functions in the pathway cofactor metabolism; pyridoxal 5'-phosphate salvage; pyridoxamine 5'-phosphate from pyridoxamine: step 1/1. Activity is increased in the presence of K(+)or Na(+). Catalyzes the phosphorylation of the dietary vitamin B6 vitamers pyridoxal (PL), pyridoxine (PN) and pyridoxamine (PM) to form pyridoxal 5'-phosphate (PLP), pyridoxine 5'-phosphate (PNP) and pyridoxamine 5'-phosphate (PMP), respectively. PLP is the active form of vitamin B6, and acts as a cofactor for over 140 different enzymatic reactions. The protein is Pyridoxal kinase (PDXK) of Sus scrofa (Pig).